The primary structure comprises 404 residues: 4-hydroxyphenylpyruvate dioxygenase (404 aa).

2 consecutive VOC domains span residues 28–163 (GYDH…FIQR) and 194–353 (YVDH…IFTK). Residues histidine 197, histidine 280, and glutamate 364 each contribute to the Fe cation site.

Belongs to the 4HPPD family. The cofactor is Fe cation.

The catalysed reaction is 3-(4-hydroxyphenyl)pyruvate + O2 = homogentisate + CO2. It functions in the pathway amino-acid degradation; L-phenylalanine degradation; acetoacetate and fumarate from L-phenylalanine: step 3/6. Its function is as follows. Key enzyme in the degradation of tyrosine. The chain is 4-hydroxyphenylpyruvate dioxygenase (TFA) from Tetrahymena thermophila.